The primary structure comprises 206 residues: Small ribosomal subunit protein uS4 (206 aa).

One can recognise an S4 RNA-binding domain in the interval 96-156 (TRLDNVVYRM…EKSRTQARIK (61 aa)).

This sequence belongs to the universal ribosomal protein uS4 family. As to quaternary structure, part of the 30S ribosomal subunit. Contacts protein S5. The interaction surface between S4 and S5 is involved in control of translational fidelity.

In terms of biological role, one of the primary rRNA binding proteins, it binds directly to 16S rRNA where it nucleates assembly of the body of the 30S subunit. Its function is as follows. With S5 and S12 plays an important role in translational accuracy. This Shewanella sp. (strain MR-4) protein is Small ribosomal subunit protein uS4.